We begin with the raw amino-acid sequence, 243 residues long: Small ribosomal subunit protein uS3 (243 aa).

The 72-residue stretch at 22 to 93 (LNEFLTRELA…SVELYAEKVA (72 aa)) folds into the KH type-2 domain. The tract at residues 195–243 (QQGKNGPKKPQPDHILVTEPKDEPAPLEPTSDIRSLAPAPLPQPVAAVA) is disordered.

The protein belongs to the universal ribosomal protein uS3 family.

In Manduca sexta (Tobacco hawkmoth), this protein is Small ribosomal subunit protein uS3 (RpS3).